Here is a 108-residue protein sequence, read N- to C-terminus: Insulin (108 aa).

The first 24 residues, 1 to 24 (MALWTRLLPLLALLALWAPAPAQA), serve as a signal peptide directing secretion. Cystine bridges form between Cys31–Cys94, Cys43–Cys107, and Cys93–Cys98. A propeptide spans 57–85 (EAENPQAGAVELGGGLGGLQALALEGPPQ) (c peptide).

Belongs to the insulin family. As to quaternary structure, heterodimer of a B chain and an A chain linked by two disulfide bonds.

It localises to the secreted. Functionally, insulin decreases blood glucose concentration. It increases cell permeability to monosaccharides, amino acids and fatty acids. It accelerates glycolysis, the pentose phosphate cycle, and glycogen synthesis in liver. This is Insulin (INS) from Sus scrofa (Pig).